We begin with the raw amino-acid sequence, 198 residues long: MGKQKKTRKYATMKRMLSLRDERLKEKDRLKPKKKEKKDPSALKEREVPQHPSCLFFQYNTQLGPPYHILVDTNFINFSIKAKLDLVQSMMDCLYAKCIPCITDCVMAEIEKLGQKFRVALRIAKDPRFDRLPCTHKGTYADDCLVQRVTQHKCYIVATVDRDLKRRIRKIPGVPIMYLSNHRYNIERMPDDYGAPRF.

A disordered region spans residues Glu-22–Glu-47. The span at Lys-37–Glu-47 shows a compositional bias: basic and acidic residues. One can recognise a PINc domain in the interval Tyr-67–Arg-166.

This sequence belongs to the UTP23/FCF1 family. FCF1 subfamily. As to quaternary structure, part of the small subunit (SSU) processome, composed of more than 70 proteins and the RNA chaperone small nucleolar RNA (snoRNA) U3.

The protein localises to the nucleus. It is found in the nucleolus. Functionally, part of the small subunit (SSU) processome, first precursor of the small eukaryotic ribosomal subunit. During the assembly of the SSU processome in the nucleolus, many ribosome biogenesis factors, an RNA chaperone and ribosomal proteins associate with the nascent pre-rRNA and work in concert to generate RNA folding, modifications, rearrangements and cleavage as well as targeted degradation of pre-ribosomal RNA by the RNA exosome. In Mus musculus (Mouse), this protein is rRNA-processing protein FCF1 homolog (Fcf1).